A 104-amino-acid polypeptide reads, in one-letter code: Naphthalene 1,2-dioxygenase system, ferredoxin component (104 aa).

The region spanning 6–101 is the Rieske domain; sequence IEAVALSDIL…VKIENLRVMI (96 aa). 4 residues coordinate [2Fe-2S] cluster: Cys-45, His-47, Cys-64, and His-67.

Belongs to the bacterial ring-hydroxylating dioxygenase ferredoxin component family. The naphthalene dioxygenase (NDO) multicomponent enzyme system is composed of an electron transfer component and a dioxygenase component (iron sulfur protein (ISP)). The electron transfer component is composed of a ferredoxin reductase (NdoR) and a ferredoxin (NdoA), and the dioxygenase component is formed of a heterohexamer (trimer of heterodimers) of three large alpha subunits (NdoB) and three small beta subunits (NdoC). [2Fe-2S] cluster serves as cofactor.

Its pathway is aromatic compound metabolism; naphthalene degradation. Component of the naphthalene dioxygenase (NDO) multicomponent enzyme system which catalyzes the incorporation of both atoms of molecular oxygen into naphthalene to form cis-(1R,2S)-dihydroxy-1,2-dihydronaphthalene. Functions as an intermediate electron transfer protein via a specific interaction with iron sulfur protein components (ISP) (NdoB and NdoC). Also able to catalyze the cis-dihydroxylation of biphenyl and phenanthrene. The sequence is that of Naphthalene 1,2-dioxygenase system, ferredoxin component from Pseudomonas putida (Arthrobacter siderocapsulatus).